A 198-amino-acid chain; its full sequence is IMP cyclohydrolase (198 aa).

It belongs to the archaeal IMP cyclohydrolase family.

The enzyme catalyses IMP + H2O = 5-formamido-1-(5-phospho-D-ribosyl)imidazole-4-carboxamide. The protein operates within purine metabolism; IMP biosynthesis via de novo pathway; IMP from 5-formamido-1-(5-phospho-D-ribosyl)imidazole-4-carboxamide: step 1/1. In terms of biological role, catalyzes the cyclization of 5-formylamidoimidazole-4-carboxamide ribonucleotide to IMP. The sequence is that of IMP cyclohydrolase from Methanopyrus kandleri (strain AV19 / DSM 6324 / JCM 9639 / NBRC 100938).